The following is a 112-amino-acid chain: Late expression factor 11 (112 aa).

Belongs to the baculoviridae LEF-11 family.

Involved in late/very late gene activation. This chain is Late expression factor 11 (LEF-11), found in Helicoverpa zea (Corn earworm moth).